Reading from the N-terminus, the 189-residue chain is Mediator of RNA polymerase II transcription subunit 10b (189 aa).

The interval 1 to 22 is disordered; that stretch reads MDPTQNTSAGIGGSNGTIRYQT.

Belongs to the Mediator complex subunit 10 family. As to quaternary structure, component of the Mediator complex.

Its subcellular location is the nucleus. Functionally, component of the Mediator complex, a coactivator involved in the regulated transcription of nearly all RNA polymerase II-dependent genes. Mediator functions as a bridge to convey information from gene-specific regulatory proteins to the basal RNA polymerase II transcription machinery. The Mediator complex, having a compact conformation in its free form, is recruited to promoters by direct interactions with regulatory proteins and serves for the assembly of a functional preinitiation complex with RNA polymerase II and the general transcription factors. This is Mediator of RNA polymerase II transcription subunit 10b (MED10B) from Arabidopsis thaliana (Mouse-ear cress).